Here is a 956-residue protein sequence, read N- to C-terminus: Protein translocase subunit SecA (956 aa).

Residues Gln-87, 105–109 (GEGKT), and Asp-524 each bind ATP. Cys-940, Cys-942, Cys-951, and His-952 together coordinate Zn(2+).

This sequence belongs to the SecA family. As to quaternary structure, monomer and homodimer. Part of the essential Sec protein translocation apparatus which comprises SecA, SecYEG and auxiliary proteins SecDF-YajC and YidC. Zn(2+) is required as a cofactor.

The protein resides in the cell inner membrane. Its subcellular location is the cytoplasm. It catalyses the reaction ATP + H2O + cellular proteinSide 1 = ADP + phosphate + cellular proteinSide 2.. In terms of biological role, part of the Sec protein translocase complex. Interacts with the SecYEG preprotein conducting channel. Has a central role in coupling the hydrolysis of ATP to the transfer of proteins into and across the cell membrane, serving both as a receptor for the preprotein-SecB complex and as an ATP-driven molecular motor driving the stepwise translocation of polypeptide chains across the membrane. The protein is Protein translocase subunit SecA of Beijerinckia indica subsp. indica (strain ATCC 9039 / DSM 1715 / NCIMB 8712).